A 472-amino-acid chain; its full sequence is Argininosuccinate lyase (472 aa).

Belongs to the lyase 1 family. Argininosuccinate lyase subfamily.

The protein localises to the cytoplasm. It catalyses the reaction 2-(N(omega)-L-arginino)succinate = fumarate + L-arginine. It participates in amino-acid biosynthesis; L-arginine biosynthesis; L-arginine from L-ornithine and carbamoyl phosphate: step 3/3. This chain is Argininosuccinate lyase, found in Maricaulis maris (strain MCS10) (Caulobacter maris).